We begin with the raw amino-acid sequence, 158 residues long: Trafficking protein particle complex subunit 6B (158 aa).

Belongs to the TRAPP small subunits family. BET3 subfamily. In terms of assembly, homodimer. Part of a TRAPP complex. Heterodimer with TRAPPC3. The heterodimer TRAPPC6B-TRAPPC3 interacts with TRAPPC1 likely providing a core for TRAPP complex formation. As to expression, widely expressed. Expressed in lung, heart, liver, spleen, brain and kidney.

Its subcellular location is the golgi apparatus. It is found in the cis-Golgi network. It localises to the endoplasmic reticulum. Component of a transport protein particle (TRAPP) complex that may function in specific stages of inter-organelle traffic. Specifically involved in the early development of neural circuitry, likely by controlling the frequency and amplitude of intracellular calcium transients implicated in the regulation of neuron differentiation and survival. The polypeptide is Trafficking protein particle complex subunit 6B (Mus musculus (Mouse)).